The sequence spans 223 residues: Ribosome maturation factor RimM (223 aa).

Residues 142 to 223 (ADEFYWVDLI…RIVVDWEADY (82 aa)) form the PRC barrel domain.

It belongs to the RimM family. As to quaternary structure, binds ribosomal protein uS19.

The protein resides in the cytoplasm. In terms of biological role, an accessory protein needed during the final step in the assembly of 30S ribosomal subunit, possibly for assembly of the head region. Essential for efficient processing of 16S rRNA. May be needed both before and after RbfA during the maturation of 16S rRNA. It has affinity for free ribosomal 30S subunits but not for 70S ribosomes. In Burkholderia multivorans (strain ATCC 17616 / 249), this protein is Ribosome maturation factor RimM.